The sequence spans 279 residues: Four and a half LIM domains protein 2 (279 aa).

The segment at 7-31 (CHHCNESLFGKKYILREESPYCVVC) adopts a C4-type zinc-finger fold. 3 consecutive LIM zinc-binding domains span residues 40-92 (CEEC…CTDC), 101-153 (CQEC…CVPC), and 162-212 (CVQC…CLNC). Lys-78 participates in a covalent cross-link: Glycyl lysine isopeptide (Lys-Gly) (interchain with G-Cter in SUMO2). Glycyl lysine isopeptide (Lys-Gly) (interchain with G-Cter in SUMO2) cross-links involve residues Lys-167 and Lys-220. One can recognise an LIM zinc-binding 4 domain in the interval 221-275 (CAGCTNPISGLGGTKYISFEERQWHNDCFNCKKCSLSLVGRGFLTERDDILCPDC). Residue Ser-238 is modified to Phosphoserine.

In terms of assembly, interacts with ZNF638 and TTN/titin. Interacts with E4F1. Interacts with GRB7. Interacts with SIRT1 and FOXO1. Interacts with CEFIP. Interacts with calcineurin. Interacts with FOXK1. In terms of tissue distribution, expressed in skeletal muscle and heart.

It localises to the cytoplasm. The protein resides in the nucleus. Its subcellular location is the myofibril. The protein localises to the sarcomere. It is found in the z line. Its function is as follows. May function as a molecular transmitter linking various signaling pathways to transcriptional regulation. Negatively regulates the transcriptional repressor E4F1 and may function in cell growth. Inhibits the transcriptional activity of FOXO1 and its apoptotic function by enhancing the interaction of FOXO1 with SIRT1 and FOXO1 deacetylation. Negatively regulates the calcineurin/NFAT signaling pathway in cardiomyocytes. The protein is Four and a half LIM domains protein 2 (FHL2) of Homo sapiens (Human).